A 235-amino-acid polypeptide reads, in one-letter code: Probable septum site-determining protein MinC (235 aa).

Residues 104–125 are disordered; the sequence is KAVRPAPVEPATPSEPPQNANP. Residues 110–119 show a composition bias toward pro residues; sequence PVEPATPSEP.

The protein belongs to the MinC family. As to quaternary structure, interacts with MinD and FtsZ.

In terms of biological role, cell division inhibitor that blocks the formation of polar Z ring septums. Rapidly oscillates between the poles of the cell to destabilize FtsZ filaments that have formed before they mature into polar Z rings. Prevents FtsZ polymerization. This Salmonella agona (strain SL483) protein is Probable septum site-determining protein MinC.